The primary structure comprises 274 residues: ATP synthase subunit a (274 aa).

A run of 5 helical transmembrane segments spans residues 44–64 (VDSMFFSLVLGSFFLSIFYMV), 110–130 (FIWVFLMNLMDLVPIDFFPFI), 142–164 (IVPSADINITLSMSLGVFFLILF), 212–232 (LFGNMYAGEMIFILIAGLLPW), and 243–263 (AIFHILIISLQAFIFMVLTIV).

This sequence belongs to the ATPase A chain family. In terms of assembly, F-type ATPases have 2 components, CF(1) - the catalytic core - and CF(0) - the membrane proton channel. CF(1) has five subunits: alpha(3), beta(3), gamma(1), delta(1), epsilon(1). CF(0) has three main subunits: a(1), b(2) and c(9-12). The alpha and beta chains form an alternating ring which encloses part of the gamma chain. CF(1) is attached to CF(0) by a central stalk formed by the gamma and epsilon chains, while a peripheral stalk is formed by the delta and b chains.

The protein resides in the cell membrane. Key component of the proton channel; it plays a direct role in the translocation of protons across the membrane. This Buchnera aphidicola subsp. Acyrthosiphon pisum (strain APS) (Acyrthosiphon pisum symbiotic bacterium) protein is ATP synthase subunit a.